The following is a 71-amino-acid chain: Sec-independent protein translocase protein TatA (71 aa).

The helical transmembrane segment at 1–21 threads the bilayer; the sequence is MGSFSLLHWLVVLVIVLLVFG. The disordered stretch occupies residues 43–71; sequence LREDDKPTDQLGSTSQSTASGPQQDHGKH. Residues 52–65 show a composition bias toward polar residues; that stretch reads QLGSTSQSTASGPQ.

The protein belongs to the TatA/E family. In terms of assembly, the Tat system comprises two distinct complexes: a TatABC complex, containing multiple copies of TatA, TatB and TatC subunits, and a separate TatA complex, containing only TatA subunits. Substrates initially bind to the TatABC complex, which probably triggers association of the separate TatA complex to form the active translocon.

Its subcellular location is the cell inner membrane. Part of the twin-arginine translocation (Tat) system that transports large folded proteins containing a characteristic twin-arginine motif in their signal peptide across membranes. TatA could form the protein-conducting channel of the Tat system. The chain is Sec-independent protein translocase protein TatA from Xylella fastidiosa (strain 9a5c).